We begin with the raw amino-acid sequence, 452 residues long: Translation initiation factor eIF2B subunit gamma (452 aa).

Met-1 carries the post-translational modification N-acetylmethionine. Position 260 is a phosphoserine (Ser-260).

Belongs to the eIF-2B gamma/epsilon subunits family. In terms of assembly, component of the translation initiation factor 2B (eIF2B) complex which is a heterodecamer of two sets of five different subunits: alpha, beta, gamma, delta and epsilon. Subunits alpha, beta and delta comprise a regulatory subcomplex and subunits epsilon and gamma comprise a catalytic subcomplex. Within the complex, the hexameric regulatory complex resides at the center, with the two heterodimeric catalytic subcomplexes bound on opposite sides.

It localises to the cytoplasm. Its subcellular location is the cytosol. Activated by the chemical integrated stress response (ISR) inhibitor ISRIB which stimulates guanine nucleotide exchange factor activity for both phosphorylated and unphosphorylated eIF2. Acts as a component of the translation initiation factor 2B (eIF2B) complex, which catalyzes the exchange of GDP for GTP on the eukaryotic initiation factor 2 (eIF2) complex gamma subunit. Its guanine nucleotide exchange factor activity is repressed when bound to eIF2 complex phosphorylated on the alpha subunit, thereby limiting the amount of methionyl-initiator methionine tRNA available to the ribosome and consequently global translation is repressed. The chain is Translation initiation factor eIF2B subunit gamma (EIF2B3) from Homo sapiens (Human).